The primary structure comprises 560 residues: Oxygen-dependent choline dehydrogenase 1 (560 aa).

8 to 37 (DYIIIGAGSAGNVLATRLTEDPDVQVLLLE) contacts FAD. Residue histidine 475 is the Proton acceptor of the active site.

It belongs to the GMC oxidoreductase family. It depends on FAD as a cofactor.

The enzyme catalyses choline + A = betaine aldehyde + AH2. The catalysed reaction is betaine aldehyde + NAD(+) + H2O = glycine betaine + NADH + 2 H(+). The protein operates within amine and polyamine biosynthesis; betaine biosynthesis via choline pathway; betaine aldehyde from choline (cytochrome c reductase route): step 1/1. Functionally, involved in the biosynthesis of the osmoprotectant glycine betaine. Catalyzes the oxidation of choline to betaine aldehyde and betaine aldehyde to glycine betaine at the same rate. This Chromohalobacter salexigens (strain ATCC BAA-138 / DSM 3043 / CIP 106854 / NCIMB 13768 / 1H11) protein is Oxygen-dependent choline dehydrogenase 1.